A 335-amino-acid polypeptide reads, in one-letter code: RNA 3'-terminal phosphate cyclase (335 aa).

ATP-binding positions include Q101 and 282–285 (HMGD). Residue H306 is the Tele-AMP-histidine intermediate of the active site.

The protein belongs to the RNA 3'-terminal cyclase family. Type 1 subfamily.

The protein resides in the cytoplasm. The catalysed reaction is a 3'-end 3'-phospho-ribonucleotide-RNA + ATP = a 3'-end 2',3'-cyclophospho-ribonucleotide-RNA + AMP + diphosphate. Functionally, catalyzes the conversion of 3'-phosphate to a 2',3'-cyclic phosphodiester at the end of RNA. The mechanism of action of the enzyme occurs in 3 steps: (A) adenylation of the enzyme by ATP; (B) transfer of adenylate to an RNA-N3'P to produce RNA-N3'PP5'A; (C) and attack of the adjacent 2'-hydroxyl on the 3'-phosphorus in the diester linkage to produce the cyclic end product. The biological role of this enzyme is unknown but it is likely to function in some aspects of cellular RNA processing. This is RNA 3'-terminal phosphate cyclase from Sulfolobus acidocaldarius (strain ATCC 33909 / DSM 639 / JCM 8929 / NBRC 15157 / NCIMB 11770).